Reading from the N-terminus, the 388-residue chain is P2X purinoceptor 4 (388 aa).

Topologically, residues 1-33 (MAGCCSVLGSFLFEYDTPRIVLIRSRKVGLMNR) are cytoplasmic. A helical membrane pass occupies residues 34–54 (AVQLLILAYVIGWVFVWEKGY). The Extracellular portion of the chain corresponds to 55–338 (QETDSVVSSV…KFDIIPTMIN (284 aa)). ATP-binding residues include Lys-67 and Lys-69. Lys-67 and Lys-69 together coordinate CTP. N-linked (GlcNAc...) asparagine glycans are attached at residues Asn-75 and Asn-110. Cystine bridges form between Cys-116–Cys-165, Cys-126–Cys-149, and Cys-132–Cys-159. Asn-153 and Asn-184 each carry an N-linked (GlcNAc...) asparagine glycan. ATP-binding residues include Thr-186 and Leu-188. Thr-186 contacts CTP. 2 N-linked (GlcNAc...) asparagine glycosylation sites follow: Asn-199 and Asn-208. 2 disulfides stabilise this stretch: Cys-217–Cys-227 and Cys-261–Cys-270. Asn-293, Arg-295, and Lys-313 together coordinate ATP. Residues Asn-293, Arg-295, and Lys-313 each coordinate CTP. The chain crosses the membrane as a helical span at residues 339 to 359 (VGSGLALLGVATVLCDVIVLY). The Cytoplasmic portion of the chain corresponds to 360–388 (CMKKKYYYRDKKYKYVEDYEQGLSGEMNQ).

It belongs to the P2X receptor family. Functional P2RXs are organized as homomeric and heteromeric trimers. Forms heterotrimer with P2RX1. Interacts with P2RX7 (via C-terminus); this interaction is functional only in the presence of ATP. Forms heterotrimer with P2RX4; functional differences between homomeric P2RX4 and P2RX4/6 heterotrimer are minor. Interacts with AP1M2. In terms of tissue distribution, widespread distribution in the brain. Strongly expressed in microglial cells. Also expressed in epithelial cells.

The protein resides in the cell membrane. It localises to the lysosome membrane. The catalysed reaction is K(+)(in) = K(+)(out). The enzyme catalyses Na(+)(in) = Na(+)(out). It catalyses the reaction Ca(2+)(in) = Ca(2+)(out). Activated by ATP. pH-dependent and inhibited by acidic pH. ATP-gated nonselective transmembrane cation channel permeable to potassium, sodium and calcium. CTP, but not GTP or UTP, functions as a weak affinity agonist for P2RX4. Activated by extracellularly released ATP, it plays multiple role in immunity and central nervous system physiology. Plays a key role in initial steps of T-cell activation and Ca(2+) microdomain formation. Also participates in basal T-cell activity without TCR/CD3 stimulation. Promotes the differentiation and activation of Th17 cells via expression of retinoic acid-related orphan receptor C/RORC. Upon activation, drives microglia motility via the PI3K/Akt pathway. Could also function as an ATP-gated cation channel of lysosomal membranes. The protein is P2X purinoceptor 4 (P2rx4) of Rattus norvegicus (Rat).